The chain runs to 299 residues: Probable lipid kinase YegS (299 aa).

A DAGKc domain is found at 2-133; that stretch reads ANFPASLLIL…IDMARVNDKT (132 aa). ATP-binding positions include threonine 40, 66 to 72, and threonine 95; that span reads GDGTINE. Residues leucine 215, aspartate 218, and leucine 220 each coordinate Mg(2+). Residue glutamate 271 is the Proton acceptor of the active site.

Belongs to the diacylglycerol/lipid kinase family. YegS lipid kinase subfamily. Mg(2+) is required as a cofactor. The cofactor is Ca(2+).

The protein resides in the cytoplasm. Its function is as follows. Probably phosphorylates lipids; the in vivo substrate is unknown. This is Probable lipid kinase YegS from Salmonella paratyphi A (strain ATCC 9150 / SARB42).